Consider the following 447-residue polypeptide: ATP-dependent protease ATPase subunit HslU (447 aa).

Residues I18, 60-65 (GVGKTE), D260, E325, and R397 contribute to the ATP site.

This sequence belongs to the ClpX chaperone family. HslU subfamily. In terms of assembly, a double ring-shaped homohexamer of HslV is capped on each side by a ring-shaped HslU homohexamer. The assembly of the HslU/HslV complex is dependent on binding of ATP.

It localises to the cytoplasm. ATPase subunit of a proteasome-like degradation complex; this subunit has chaperone activity. The binding of ATP and its subsequent hydrolysis by HslU are essential for unfolding of protein substrates subsequently hydrolyzed by HslV. HslU recognizes the N-terminal part of its protein substrates and unfolds these before they are guided to HslV for hydrolysis. The chain is ATP-dependent protease ATPase subunit HslU from Paraburkholderia phymatum (strain DSM 17167 / CIP 108236 / LMG 21445 / STM815) (Burkholderia phymatum).